Consider the following 229-residue polypeptide: Cytidylate kinase (229 aa).

Residue 12-20 (GPSGSGKGT) participates in ATP binding.

It belongs to the cytidylate kinase family. Type 1 subfamily.

Its subcellular location is the cytoplasm. It carries out the reaction CMP + ATP = CDP + ADP. The catalysed reaction is dCMP + ATP = dCDP + ADP. The sequence is that of Cytidylate kinase from Pseudomonas syringae pv. tomato (strain ATCC BAA-871 / DC3000).